The following is a 485-amino-acid chain: NADH-quinone oxidoreductase subunit N (485 aa).

14 helical membrane-spanning segments follow: residues 8 to 28, 35 to 55, 75 to 95, 105 to 125, 127 to 147, 159 to 179, 203 to 223, 235 to 255, 271 to 291, 297 to 317, 326 to 346, 374 to 394, 407 to 426, and 449 to 469; these read LIALSPLLIVGLTVVVVMLCI, FVNATMTVIGLNIALLSLYFV, FYTGLVLLASLATSTFAYPWL, FYLLVLIAALGGILLSSANHL, SLFIGIELLSLPLFGLVGYAF, YMLLSAAASSFLLFGMALIYA, LLAGLGMMIVGLGFKLSLVPF, PAPVSTFLATAGKIAVFGAVM, IVLGVIAFASILFGNVMAVSQ, LLGYSSIAHLGYLLVALIAVQ, VGVYLVGYLFSSLGAFGVVSL, AVMTVMMLSLAGIPMTLGFFG, LWWLTGAVVLGSAIGLYYYL, and ALTAGGVVVLISSIAVLFFGL.

This sequence belongs to the complex I subunit 2 family. In terms of assembly, NDH-1 is composed of 13 different subunits. Subunits NuoA, H, J, K, L, M, N constitute the membrane sector of the complex.

It localises to the cell inner membrane. The enzyme catalyses a quinone + NADH + 5 H(+)(in) = a quinol + NAD(+) + 4 H(+)(out). NDH-1 shuttles electrons from NADH, via FMN and iron-sulfur (Fe-S) centers, to quinones in the respiratory chain. The immediate electron acceptor for the enzyme in this species is believed to be ubiquinone. Couples the redox reaction to proton translocation (for every two electrons transferred, four hydrogen ions are translocated across the cytoplasmic membrane), and thus conserves the redox energy in a proton gradient. The chain is NADH-quinone oxidoreductase subunit N from Pectobacterium carotovorum subsp. carotovorum (strain PC1).